The following is a 573-amino-acid chain: Glutathione hydrolase 5 proenzyme (573 aa).

Topologically, residues 1–8 are cytoplasmic; it reads MAWGHRAT. The chain crosses the membrane as a helical; Signal-anchor for type II membrane protein span at residues 9–29; sequence VCLVLLGVGLGLVIVVLAAVL. Over 30–573 the chain is Extracellular; sequence SPRQASCGPG…LRKAGKASGY (544 aa). Residue asparagine 98 is glycosylated (N-linked (GlcNAc...) asparagine). An L-glutamate-binding site is contributed by arginine 110. Residues asparagine 185, asparagine 204, asparagine 277, asparagine 303, asparagine 347, and asparagine 378 are each glycosylated (N-linked (GlcNAc...) asparagine). Threonine 389 serves as the catalytic Nucleophile. Residues threonine 407, glutamate 428, and 454–455 contribute to the L-glutamate site; that span reads SS.

It belongs to the gamma-glutamyltransferase family. As to quaternary structure, heterodimer composed of the light and heavy chains. The active site is located in the light chain. In terms of processing, cleaved by autocatalysis into a large and a small subunit. Glycosylated. As to expression, very low level of expression. Detected in spleen lymphocytes, medullary and paracortical thymic lymphocytes, lung interstitial cells, bronchial epithelium, proximal tubules in kidney, crypt cells in small intestine, neurons in brain stem and cerebral cortex and in Purkinje cells. Very low expression.

The protein resides in the membrane. The catalysed reaction is glutathione + H2O = L-cysteinylglycine + L-glutamate. It carries out the reaction an S-substituted glutathione + H2O = an S-substituted L-cysteinylglycine + L-glutamate. The enzyme catalyses leukotriene C4 + H2O = leukotriene D4 + L-glutamate. It catalyses the reaction S-[(2E,6E,10E)-geranylgeranyl]-L-glutathione + H2O = S-[(2E,6E,10E)-geranylgeranyl]-L-cysteinylglycine + L-glutamate. The catalysed reaction is an N-terminal (5-L-glutamyl)-[peptide] + an alpha-amino acid = 5-L-glutamyl amino acid + an N-terminal L-alpha-aminoacyl-[peptide]. Its pathway is lipid metabolism; leukotriene D4 biosynthesis. It functions in the pathway sulfur metabolism; glutathione metabolism. Its activity is regulated as follows. Inhibited by serine-borate. Cleaves the gamma-glutamyl bond of extracellular glutathione tripeptide (gamma-Glu-Cys-Gly) and certain glutathione conjugates. Hydrolyzes glutathione releasing L-Glu and Cys-Gly dipeptide which is further metabolized to maintain extracellular cysteine levels but also to provide cysteine necessary for intracellular glutathione synthesis. Among glutathione-S-conjugates metabolizes leukotriene C4 (LTC4) and S-geranylgeranyl-glutathione (GGG), but is inactive toward gamma-glutamyl leucine. Converts extracellular LTC4 to LTD4 during acute inflammatory response. Acts as a negative regulator of GGG bioactivity. GGT5 (via GGG catabolism) and ABCC1 (via extracellular transport) establish GGG gradients within lymphoid tissues to position P2RY8-positive lymphocytes at germinal centers in lymphoid follicles and restrict their chemotactic transmigration from blood vessels to bone marrow parenchyma. The transpeptidation reaction, i.e. the transfer of gamma-glutamyl moiety to an acceptor molecule to yield a new gamma-glutamyl compound requires high concentration of dipeptide acceptor and is considered nonphysiological. The chain is Glutathione hydrolase 5 proenzyme (Ggt5) from Mus musculus (Mouse).